A 338-amino-acid chain; its full sequence is Ketol-acid reductoisomerase (NADP(+)) (338 aa).

The KARI N-terminal Rossmann domain occupies 1-181 (MNVYYDKDCD…GGGRSGIIET (181 aa)). Residues 24-27 (YGSQ), Arg47, Ser50, Ser52, and 82-85 (DEFQ) contribute to the NADP(+) site. His107 is a catalytic residue. Gly133 is a binding site for NADP(+). The 146-residue stretch at 182–327 (TFKDETETDL…AKLRGMMPWI (146 aa)) folds into the KARI C-terminal knotted domain. Residues Asp190, Glu194, Glu226, and Glu230 each coordinate Mg(2+). A substrate-binding site is contributed by Ser251.

It belongs to the ketol-acid reductoisomerase family. Mg(2+) serves as cofactor.

It carries out the reaction (2R)-2,3-dihydroxy-3-methylbutanoate + NADP(+) = (2S)-2-acetolactate + NADPH + H(+). The catalysed reaction is (2R,3R)-2,3-dihydroxy-3-methylpentanoate + NADP(+) = (S)-2-ethyl-2-hydroxy-3-oxobutanoate + NADPH + H(+). It functions in the pathway amino-acid biosynthesis; L-isoleucine biosynthesis; L-isoleucine from 2-oxobutanoate: step 2/4. It participates in amino-acid biosynthesis; L-valine biosynthesis; L-valine from pyruvate: step 2/4. In terms of biological role, involved in the biosynthesis of branched-chain amino acids (BCAA). Catalyzes an alkyl-migration followed by a ketol-acid reduction of (S)-2-acetolactate (S2AL) to yield (R)-2,3-dihydroxy-isovalerate. In the isomerase reaction, S2AL is rearranged via a Mg-dependent methyl migration to produce 3-hydroxy-3-methyl-2-ketobutyrate (HMKB). In the reductase reaction, this 2-ketoacid undergoes a metal-dependent reduction by NADPH to yield (R)-2,3-dihydroxy-isovalerate. This chain is Ketol-acid reductoisomerase (NADP(+)), found in Psychrobacter arcticus (strain DSM 17307 / VKM B-2377 / 273-4).